The chain runs to 60 residues: Large ribosomal subunit protein bL33 (60 aa).

The protein belongs to the bacterial ribosomal protein bL33 family.

This is Large ribosomal subunit protein bL33 from Chlorobium phaeobacteroides (strain DSM 266 / SMG 266 / 2430).